The primary structure comprises 35 residues: Photosystem II reaction center protein T (35 aa).

The chain crosses the membrane as a helical span at residues 3 to 23 (ALVYTFLLVSTLGIIFFAIFF).

The protein belongs to the PsbT family. In terms of assembly, PSII is composed of 1 copy each of membrane proteins PsbA, PsbB, PsbC, PsbD, PsbE, PsbF, PsbH, PsbI, PsbJ, PsbK, PsbL, PsbM, PsbT, PsbY, PsbZ, Psb30/Ycf12, at least 3 peripheral proteins of the oxygen-evolving complex and a large number of cofactors. It forms dimeric complexes.

The protein localises to the plastid. It is found in the chloroplast thylakoid membrane. Found at the monomer-monomer interface of the photosystem II (PS II) dimer, plays a role in assembly and dimerization of PSII. PSII is a light-driven water plastoquinone oxidoreductase, using light energy to abstract electrons from H(2)O, generating a proton gradient subsequently used for ATP formation. The protein is Photosystem II reaction center protein T of Cabomba caroliniana (Carolina fanwort).